A 420-amino-acid polypeptide reads, in one-letter code: Serine hydroxymethyltransferase (420 aa).

Residues Leu117 and Gly121 to Leu123 each bind (6S)-5,6,7,8-tetrahydrofolate. Lys226 is modified (N6-(pyridoxal phosphate)lysine).

The protein belongs to the SHMT family. Homodimer. Pyridoxal 5'-phosphate is required as a cofactor.

The protein resides in the cytoplasm. The enzyme catalyses (6R)-5,10-methylene-5,6,7,8-tetrahydrofolate + glycine + H2O = (6S)-5,6,7,8-tetrahydrofolate + L-serine. The protein operates within one-carbon metabolism; tetrahydrofolate interconversion. It participates in amino-acid biosynthesis; glycine biosynthesis; glycine from L-serine: step 1/1. In terms of biological role, catalyzes the reversible interconversion of serine and glycine with tetrahydrofolate (THF) serving as the one-carbon carrier. This reaction serves as the major source of one-carbon groups required for the biosynthesis of purines, thymidylate, methionine, and other important biomolecules. Also exhibits THF-independent aldolase activity toward beta-hydroxyamino acids, producing glycine and aldehydes, via a retro-aldol mechanism. The sequence is that of Serine hydroxymethyltransferase from Rhodopirellula baltica (strain DSM 10527 / NCIMB 13988 / SH1).